Reading from the N-terminus, the 592-residue chain is Aspartate--tRNA(Asp/Asn) ligase (592 aa).

Glu-176 provides a ligand contact to L-aspartate. The segment at 200-203 is aspartate; sequence QIFK. Residue Arg-222 participates in L-aspartate binding. ATP-binding positions include 222-224 and Gln-231; that span reads RDE. Position 450 (His-450) interacts with L-aspartate. Residue Glu-484 coordinates ATP. Arg-491 is a binding site for L-aspartate. 536 to 539 is a binding site for ATP; the sequence is GLDR.

This sequence belongs to the class-II aminoacyl-tRNA synthetase family. Type 1 subfamily. As to quaternary structure, homodimer.

The protein resides in the cytoplasm. It carries out the reaction tRNA(Asx) + L-aspartate + ATP = L-aspartyl-tRNA(Asx) + AMP + diphosphate. Functionally, aspartyl-tRNA synthetase with relaxed tRNA specificity since it is able to aspartylate not only its cognate tRNA(Asp) but also tRNA(Asn). Reaction proceeds in two steps: L-aspartate is first activated by ATP to form Asp-AMP and then transferred to the acceptor end of tRNA(Asp/Asn). The sequence is that of Aspartate--tRNA(Asp/Asn) ligase from Anoxybacillus flavithermus (strain DSM 21510 / WK1).